We begin with the raw amino-acid sequence, 140 residues long: MSRIFSSALQAVFKPSAFLPKTATRSFSILPSLRPATLSSTPSTIFRAPNAITAPSASPSATTGIDGEVLDLLSASSLISSHPALSGLGSQIRCGPRPTMSGATRLVQKRRHGFLSRVKTKNGQKTLKRRLAKGRLRLSA.

This sequence belongs to the bacterial ribosomal protein bL34 family. As to quaternary structure, component of the mitochondrial large ribosomal subunit (mt-LSU). Mature N.crassa 74S mitochondrial ribosomes consist of a small (37S) and a large (54S) subunit. The 37S small subunit contains a 16S ribosomal RNA (16S mt-rRNA) and 32 different proteins. The 54S large subunit contains a 23S rRNA (23S mt-rRNA) and 42 different proteins.

It localises to the mitochondrion. Functionally, component of the mitochondrial ribosome (mitoribosome), a dedicated translation machinery responsible for the synthesis of mitochondrial genome-encoded proteins, including at least some of the essential transmembrane subunits of the mitochondrial respiratory chain. The mitoribosomes are attached to the mitochondrial inner membrane and translation products are cotranslationally integrated into the membrane. In Neurospora crassa (strain ATCC 24698 / 74-OR23-1A / CBS 708.71 / DSM 1257 / FGSC 987), this protein is Large ribosomal subunit protein bL34m (mrpl34).